Here is a 210-residue protein sequence, read N- to C-terminus: Tetraspanin-31 (210 aa).

Residues 1 to 12 lie on the Cytoplasmic side of the membrane; the sequence is MVCGGFACSRNA. The chain crosses the membrane as a helical span at residues 13–33; it reads LCALNVVYMLVGFLLIGVAAW. Topologically, residues 34-44 are extracellular; it reads GKGLGVVSSIH. A helical transmembrane segment spans residues 45 to 65; that stretch reads IIGGVIAVGVFLLLIAVAGLV. At 66–72 the chain is on the cytoplasmic side; the sequence is GAANHHQ. A helical membrane pass occupies residues 73–93; sequence VLLFFYMIILGLVFIFQFGIS. Residues 94–173 are Extracellular-facing; the sequence is CSCLAINRNT…FLKHSDKALK (80 aa). N-linked (GlcNAc...) asparagine glycans are attached at residues asparagine 109, asparagine 117, and asparagine 134. A helical membrane pass occupies residues 174 to 194; the sequence is ILGGVGLFFSFTEILGVWLAM. Residues 195 to 210 are Cytoplasmic-facing; sequence RFRNQKDPRANPSAFL.

This sequence belongs to the tetraspanin (TM4SF) family.

It is found in the membrane. This chain is Tetraspanin-31 (Tspan31), found in Mus musculus (Mouse).